A 376-amino-acid chain; its full sequence is N-acetyldiaminopimelate deacetylase (376 aa).

The active site involves aspartate 69. The active-site Proton acceptor is glutamate 128.

It belongs to the peptidase M20A family. N-acetyldiaminopimelate deacetylase subfamily.

The enzyme catalyses N-acetyl-(2S,6S)-2,6-diaminopimelate + H2O = (2S,6S)-2,6-diaminopimelate + acetate. Its pathway is amino-acid biosynthesis; L-lysine biosynthesis via DAP pathway; LL-2,6-diaminopimelate from (S)-tetrahydrodipicolinate (acetylase route): step 3/3. In terms of biological role, catalyzes the conversion of N-acetyl-diaminopimelate to diaminopimelate and acetate. The sequence is that of N-acetyldiaminopimelate deacetylase from Bacillus cytotoxicus (strain DSM 22905 / CIP 110041 / 391-98 / NVH 391-98).